Consider the following 157-residue polypeptide: Protein-export protein SecB (157 aa).

It belongs to the SecB family. Homotetramer, a dimer of dimers. One homotetramer interacts with 1 SecA dimer.

The protein resides in the cytoplasm. In terms of biological role, one of the proteins required for the normal export of preproteins out of the cell cytoplasm. It is a molecular chaperone that binds to a subset of precursor proteins, maintaining them in a translocation-competent state. It also specifically binds to its receptor SecA. This is Protein-export protein SecB from Tolumonas auensis (strain DSM 9187 / NBRC 110442 / TA 4).